Here is an 831-residue protein sequence, read N- to C-terminus: DNA ligase (831 aa).

Residues 34–38 (DADYD), 83–84 (SL), and Glu114 each bind NAD(+). Lys116 (N6-AMP-lysine intermediate) is an active-site residue. Arg137, Glu174, Lys291, and Lys315 together coordinate NAD(+). Cys409, Cys412, Cys427, and Cys433 together coordinate Zn(2+). The BRCT domain maps to 749–831 (AHTAPLNGQS…LAFLEQYSAQ (83 aa)).

Belongs to the NAD-dependent DNA ligase family. LigA subfamily. Mg(2+) is required as a cofactor. Requires Mn(2+) as cofactor.

The enzyme catalyses NAD(+) + (deoxyribonucleotide)n-3'-hydroxyl + 5'-phospho-(deoxyribonucleotide)m = (deoxyribonucleotide)n+m + AMP + beta-nicotinamide D-nucleotide.. Functionally, DNA ligase that catalyzes the formation of phosphodiester linkages between 5'-phosphoryl and 3'-hydroxyl groups in double-stranded DNA using NAD as a coenzyme and as the energy source for the reaction. It is essential for DNA replication and repair of damaged DNA. In Xylella fastidiosa (strain M23), this protein is DNA ligase.